A 377-amino-acid polypeptide reads, in one-letter code: MAKADFYETLGVSKTADEKELKSAFRKLAMKFHPDKNPDDADSERKFKEINEAYETLKDPQKRAAYDRFGHAAFENGGMGGGGMGGGGFANGGFSDIFEDIFGEMMGGGRARRSSGGRERGADLRYNMEITLEEAFAGKTAQIRVPTSITCDVCSGSGAKPGTQPKTCATCQGSGRVRAAQGFFSVERTCPTCHGRGQTISDPCGKCHGQGRVTEERSLSVNIPSGIEDGTRIRLQGEGEAGMRGGPAGDLYIFLSVRPHEFFQRDGADLYCTVPISMTTAALGGTFDVTTLDGTKSRVTVPEGTQPGKQFRLKGKGMPVLRSAQTGDLYIQIQIETPQKLSKRQRELLQEFEQLSSKENNPESTGFFARMKEFFDG.

The J domain maps to 5-70 (DFYETLGVSK…QKRAAYDRFG (66 aa)). The segment at 138 to 216 (GKTAQIRVPT…CHGQGRVTEE (79 aa)) adopts a CR-type zinc-finger fold. The Zn(2+) site is built by Cys151, Cys154, Cys168, Cys171, Cys190, Cys193, Cys204, and Cys207. CXXCXGXG motif repeat units follow at residues 151-158 (CDVCSGSG), 168-175 (CATCQGSG), 190-197 (CPTCHGRG), and 204-211 (CGKCHGQG).

Belongs to the DnaJ family. In terms of assembly, homodimer. Requires Zn(2+) as cofactor.

The protein resides in the cytoplasm. In terms of biological role, participates actively in the response to hyperosmotic and heat shock by preventing the aggregation of stress-denatured proteins and by disaggregating proteins, also in an autonomous, DnaK-independent fashion. Unfolded proteins bind initially to DnaJ; upon interaction with the DnaJ-bound protein, DnaK hydrolyzes its bound ATP, resulting in the formation of a stable complex. GrpE releases ADP from DnaK; ATP binding to DnaK triggers the release of the substrate protein, thus completing the reaction cycle. Several rounds of ATP-dependent interactions between DnaJ, DnaK and GrpE are required for fully efficient folding. Also involved, together with DnaK and GrpE, in the DNA replication of plasmids through activation of initiation proteins. This Agrobacterium fabrum (strain C58 / ATCC 33970) (Agrobacterium tumefaciens (strain C58)) protein is Chaperone protein DnaJ.